We begin with the raw amino-acid sequence, 606 residues long: NADH-ubiquinone oxidoreductase chain 5 (606 aa).

Transmembrane regions (helical) follow at residues 3–23 (VINLIPTLTLTSLIILTLPIT), 38–58 (ITKMAVTCAFAISLIPTLLFL), 87–107 (FFSLTFMPIALFITWSIMEFS), 124–144 (LLLFLITMLILVSANNLLQLF), 180–200 (IGDMGFIMMMAWFIIHLNSWE), 216–236 (LLGLLLASAGKSAQFGLHPWL), 244–264 (TPVSALLHSSTMVMAGVFTLI), 276–296 (IQTSTLCLGAITTLFTAICAL), 304–323 (IIALSTSSQLGLMMVTIGIN), 328–350 (AFTHMCTHAFFKAMLFLSSGSII), 369–389 (MPITSTAIIIGSLALTGMPFL), 404–424 (MSYINTWALLITLIAVSMTAS), 460–480 (LILGSIFMGFFISMNTIPHTT), 483–503 (MTMPPHLKFMALAVTLLGFTV), and 586–606 (LMKLYFLSFLLSITLGLLITL).

Belongs to the complex I subunit 5 family. Core subunit of respiratory chain NADH dehydrogenase (Complex I) which is composed of 45 different subunits.

It localises to the mitochondrion inner membrane. The catalysed reaction is a ubiquinone + NADH + 5 H(+)(in) = a ubiquinol + NAD(+) + 4 H(+)(out). Its function is as follows. Core subunit of the mitochondrial membrane respiratory chain NADH dehydrogenase (Complex I) which catalyzes electron transfer from NADH through the respiratory chain, using ubiquinone as an electron acceptor. Essential for the catalytic activity and assembly of complex I. The polypeptide is NADH-ubiquinone oxidoreductase chain 5 (MT-ND5) (Elephas maximus (Indian elephant)).